A 180-amino-acid polypeptide reads, in one-letter code: Large ribosomal subunit protein uL6 (180 aa).

The protein belongs to the universal ribosomal protein uL6 family. Part of the 50S ribosomal subunit.

Its function is as follows. This protein binds to the 23S rRNA, and is important in its secondary structure. It is located near the subunit interface in the base of the L7/L12 stalk, and near the tRNA binding site of the peptidyltransferase center. The chain is Large ribosomal subunit protein uL6 from Salinispora arenicola (strain CNS-205).